A 296-amino-acid chain; its full sequence is uncharacterized protein (296 aa).

Helical transmembrane passes span 82 to 102 and 117 to 137; these read VVAP…WSVQ and ISVL…SAIF.

The protein resides in the cell membrane. This is an uncharacterized protein from Sinorhizobium fredii (strain NBRC 101917 / NGR234).